The following is a 545-amino-acid chain: CTP synthase (545 aa).

The interval 1 to 266 (MTHFIFVTGG…DDLICERFGF (266 aa)) is amidoligase domain. Residue Ser-13 participates in CTP binding. Ser-13 provides a ligand contact to UTP. Residues 14–19 (SLGKGI) and Asp-71 each bind ATP. 2 residues coordinate Mg(2+): Asp-71 and Glu-140. CTP-binding positions include 147 to 149 (DIE), 187 to 192 (KTKPTQ), and Lys-223. Residues 187–192 (KTKPTQ) and Lys-223 each bind UTP. Residue 239 to 241 (KDA) participates in ATP binding. A Glutamine amidotransferase type-1 domain is found at 292 to 543 (RVAMVGKYVE…IDAAKTQHQK (252 aa)). Gly-353 contacts L-glutamine. The Nucleophile; for glutamine hydrolysis role is filled by Cys-380. Residues 381–384 (LGMQ), Glu-404, and Arg-471 contribute to the L-glutamine site. Active-site residues include His-516 and Glu-518.

Belongs to the CTP synthase family. In terms of assembly, homotetramer.

The catalysed reaction is UTP + L-glutamine + ATP + H2O = CTP + L-glutamate + ADP + phosphate + 2 H(+). It catalyses the reaction L-glutamine + H2O = L-glutamate + NH4(+). It carries out the reaction UTP + NH4(+) + ATP = CTP + ADP + phosphate + 2 H(+). The protein operates within pyrimidine metabolism; CTP biosynthesis via de novo pathway; CTP from UDP: step 2/2. With respect to regulation, allosterically activated by GTP, when glutamine is the substrate; GTP has no effect on the reaction when ammonia is the substrate. The allosteric effector GTP functions by stabilizing the protein conformation that binds the tetrahedral intermediate(s) formed during glutamine hydrolysis. Inhibited by the product CTP, via allosteric rather than competitive inhibition. Its function is as follows. Catalyzes the ATP-dependent amination of UTP to CTP with either L-glutamine or ammonia as the source of nitrogen. Regulates intracellular CTP levels through interactions with the four ribonucleotide triphosphates. This Acinetobacter baumannii (strain AB307-0294) protein is CTP synthase.